Here is a 310-residue protein sequence, read N- to C-terminus: tRNA-cytidine(32) 2-sulfurtransferase (310 aa).

The PP-loop motif signature appears at 47-52; it reads SGGKDS. Residues C122, C125, and C213 each coordinate [4Fe-4S] cluster.

Belongs to the TtcA family. As to quaternary structure, homodimer. The cofactor is Mg(2+). It depends on [4Fe-4S] cluster as a cofactor.

The protein localises to the cytoplasm. The catalysed reaction is cytidine(32) in tRNA + S-sulfanyl-L-cysteinyl-[cysteine desulfurase] + AH2 + ATP = 2-thiocytidine(32) in tRNA + L-cysteinyl-[cysteine desulfurase] + A + AMP + diphosphate + H(+). It participates in tRNA modification. In terms of biological role, catalyzes the ATP-dependent 2-thiolation of cytidine in position 32 of tRNA, to form 2-thiocytidine (s(2)C32). The sulfur atoms are provided by the cysteine/cysteine desulfurase (IscS) system. The sequence is that of tRNA-cytidine(32) 2-sulfurtransferase from Serratia proteamaculans (strain 568).